The following is a 338-amino-acid chain: Glycerol-3-phosphate dehydrogenase [NAD(P)+] (338 aa).

NADPH contacts are provided by Ser14, Tyr15, His35, and Lys109. 3 residues coordinate sn-glycerol 3-phosphate: Lys109, Gly138, and Thr140. NADPH is bound at residue Ala142. The sn-glycerol 3-phosphate site is built by Lys194, Asp247, Ser257, Arg258, and Asn259. Lys194 (proton acceptor) is an active-site residue. Residue Arg258 coordinates NADPH. 2 residues coordinate NADPH: Val282 and Glu284.

Belongs to the NAD-dependent glycerol-3-phosphate dehydrogenase family.

Its subcellular location is the cytoplasm. It catalyses the reaction sn-glycerol 3-phosphate + NAD(+) = dihydroxyacetone phosphate + NADH + H(+). It carries out the reaction sn-glycerol 3-phosphate + NADP(+) = dihydroxyacetone phosphate + NADPH + H(+). The protein operates within membrane lipid metabolism; glycerophospholipid metabolism. Functionally, catalyzes the reduction of the glycolytic intermediate dihydroxyacetone phosphate (DHAP) to sn-glycerol 3-phosphate (G3P), the key precursor for phospholipid synthesis. The polypeptide is Glycerol-3-phosphate dehydrogenase [NAD(P)+] (Shewanella sp. (strain MR-4)).